Reading from the N-terminus, the 89-residue chain is Small ribosomal subunit protein uS14 (89 aa).

Belongs to the universal ribosomal protein uS14 family. As to quaternary structure, part of the 30S ribosomal subunit. Contacts proteins S3 and S10.

Binds 16S rRNA, required for the assembly of 30S particles and may also be responsible for determining the conformation of the 16S rRNA at the A site. In Streptococcus pneumoniae serotype 2 (strain D39 / NCTC 7466), this protein is Small ribosomal subunit protein uS14.